Here is a 503-residue protein sequence, read N- to C-terminus: MDLMSLTAVELGKKIQAKEVTVEEAVKAAIASIKAKEEKINSFVTIDEEGALKKAAEVQAKIDAGELKGALAGVPVAIKDNMCTEGLLTTCSSKILYNFIPTYTAEAVKRLEDAGCVIVGKTNMDEFAMGSTTETSAFGATKNPWNTEHVPGGSSGGSCAAVAAEEVPFALGSDTGGSIRQPSSFCGVTGIKPTYGTVSRYGLIAYGSSLDQIGPIAKDVTDCAIILEAIASYDTKDSTSVNRDDLKFTEALVDDVKGMKIGIPKDYLGDGLDPEVKSAILAAADELKKKGAVVEEFDLGLVEYAIPAYYVIACAEASSNLARFDGVKYGYRTKEYTDLHNMYKKSRSEGFGPEVKRRIMLGSFVLSSGYYDAYYLKALRVKALIKKAFDDAFAKYDVILGPAAPTTAPKLGESLSDPIQMYLGDIYTISVNLAGLPGISLPCGMDKNGLPIGLQLIGDCFKEKNIIRAAYSFEKTRELKRSTIAEEYSNKNTADTNKSAGAQ.

Residues Lys-79 and Ser-154 each act as charge relay system in the active site. The Acyl-ester intermediate role is filled by Ser-178.

It belongs to the amidase family. GatA subfamily. As to quaternary structure, heterotrimer of A, B and C subunits.

It carries out the reaction L-glutamyl-tRNA(Gln) + L-glutamine + ATP + H2O = L-glutaminyl-tRNA(Gln) + L-glutamate + ADP + phosphate + H(+). Functionally, allows the formation of correctly charged Gln-tRNA(Gln) through the transamidation of misacylated Glu-tRNA(Gln) in organisms which lack glutaminyl-tRNA synthetase. The reaction takes place in the presence of glutamine and ATP through an activated gamma-phospho-Glu-tRNA(Gln). This chain is Glutamyl-tRNA(Gln) amidotransferase subunit A, found in Agathobacter rectalis (strain ATCC 33656 / DSM 3377 / JCM 17463 / KCTC 5835 / VPI 0990) (Eubacterium rectale).